We begin with the raw amino-acid sequence, 242 residues long: Ribonuclease 3 (242 aa).

The RNase III domain occupies 12-139 (ANELLEALGT…LIGATFLEHG (128 aa)). Glu-51 contacts Mg(2+). Asp-55 is an active-site residue. Mg(2+) contacts are provided by Asp-125 and Glu-128. The active site involves Glu-128. A DRBM domain is found at 165 to 236 (LDWKTSLTVK…AEAGWKSLDS (72 aa)).

The protein belongs to the ribonuclease III family. Homodimer. Requires Mg(2+) as cofactor.

The protein localises to the cytoplasm. It carries out the reaction Endonucleolytic cleavage to 5'-phosphomonoester.. In terms of biological role, digests double-stranded RNA. Involved in the processing of primary rRNA transcript to yield the immediate precursors to the large and small rRNAs (23S and 16S). Processes some mRNAs, and tRNAs when they are encoded in the rRNA operon. Processes pre-crRNA and tracrRNA of type II CRISPR loci if present in the organism. This is Ribonuclease 3 from Bifidobacterium longum (strain NCC 2705).